The primary structure comprises 244 residues: Tetraspanin-1 (244 aa).

4 helical membrane-spanning segments follow: residues 11–31, 67–87, 104–124, and 198–218; these read VLFF…AVGF, LIVV…TAVL, YLVL…AVLV, and ILLV…PILI.

It belongs to the tetraspanin (TM4SF) family.

Its subcellular location is the membrane. The chain is Tetraspanin-1 (tsp-1) from Caenorhabditis elegans.